The primary structure comprises 278 residues: 4-deoxy-L-threo-5-hexosulose-uronate ketol-isomerase (278 aa).

Positions 196, 198, 203, and 245 each coordinate Zn(2+).

It belongs to the KduI family. As to quaternary structure, homohexamer. The cofactor is Zn(2+).

The enzyme catalyses 5-dehydro-4-deoxy-D-glucuronate = 3-deoxy-D-glycero-2,5-hexodiulosonate. Its pathway is glycan metabolism; pectin degradation; 2-dehydro-3-deoxy-D-gluconate from pectin: step 4/5. In terms of biological role, catalyzes the isomerization of 5-dehydro-4-deoxy-D-glucuronate to 3-deoxy-D-glycero-2,5-hexodiulosonate. The sequence is that of 4-deoxy-L-threo-5-hexosulose-uronate ketol-isomerase from Escherichia coli (strain K12 / MC4100 / BW2952).